Consider the following 318-residue polypeptide: Ribosomal protein L11 methyltransferase (318 aa).

T159, G180, D202, and N253 together coordinate S-adenosyl-L-methionine.

It belongs to the methyltransferase superfamily. PrmA family.

It localises to the cytoplasm. It catalyses the reaction L-lysyl-[protein] + 3 S-adenosyl-L-methionine = N(6),N(6),N(6)-trimethyl-L-lysyl-[protein] + 3 S-adenosyl-L-homocysteine + 3 H(+). Its function is as follows. Methylates ribosomal protein L11. The protein is Ribosomal protein L11 methyltransferase of Lachnospira eligens (strain ATCC 27750 / DSM 3376 / VPI C15-48 / C15-B4) (Eubacterium eligens).